A 364-amino-acid chain; its full sequence is tRNA 2-selenouridine synthase (364 aa).

One can recognise a Rhodanese domain in the interval 14–137; the sequence is LLADTPLIDV…LRQTAIQATW (124 aa). Residue cysteine 97 is the S-selanylcysteine intermediate of the active site.

This sequence belongs to the SelU family. As to quaternary structure, monomer.

The catalysed reaction is 5-methylaminomethyl-2-thiouridine(34) in tRNA + selenophosphate + (2E)-geranyl diphosphate + H2O + H(+) = 5-methylaminomethyl-2-selenouridine(34) in tRNA + (2E)-thiogeraniol + phosphate + diphosphate. It carries out the reaction 5-methylaminomethyl-2-thiouridine(34) in tRNA + (2E)-geranyl diphosphate = 5-methylaminomethyl-S-(2E)-geranyl-thiouridine(34) in tRNA + diphosphate. It catalyses the reaction 5-methylaminomethyl-S-(2E)-geranyl-thiouridine(34) in tRNA + selenophosphate + H(+) = 5-methylaminomethyl-2-(Se-phospho)selenouridine(34) in tRNA + (2E)-thiogeraniol. The enzyme catalyses 5-methylaminomethyl-2-(Se-phospho)selenouridine(34) in tRNA + H2O = 5-methylaminomethyl-2-selenouridine(34) in tRNA + phosphate. In terms of biological role, involved in the post-transcriptional modification of the uridine at the wobble position (U34) of tRNA(Lys), tRNA(Glu) and tRNA(Gln). Catalyzes the conversion of 2-thiouridine (S2U-RNA) to 2-selenouridine (Se2U-RNA). Acts in a two-step process involving geranylation of 2-thiouridine (S2U) to S-geranyl-2-thiouridine (geS2U) and subsequent selenation of the latter derivative to 2-selenouridine (Se2U) in the tRNA chain. This chain is tRNA 2-selenouridine synthase, found in Salmonella enteritidis.